We begin with the raw amino-acid sequence, 360 residues long: Peptide chain release factor 1 (360 aa).

The residue at position 235 (glutamine 235) is an N5-methylglutamine. Residues 285-295 (RQAAEQTDMRR) show a composition bias toward basic and acidic residues. A disordered region spans residues 285 to 309 (RQAAEQTDMRRNLLGSGDRSDKIRT).

It belongs to the prokaryotic/mitochondrial release factor family. Methylated by PrmC. Methylation increases the termination efficiency of RF1.

The protein resides in the cytoplasm. Its function is as follows. Peptide chain release factor 1 directs the termination of translation in response to the peptide chain termination codons UAG and UAA. The sequence is that of Peptide chain release factor 1 (prfA) from Haemophilus influenzae (strain ATCC 51907 / DSM 11121 / KW20 / Rd).